Consider the following 248-residue polypeptide: MKIAAIIPSRYGSTRFAGKPLAPIAGIPMIQRVYDQVKQAICVTDIAVATDDRRIVEAVTRFGGNALMTSAACRSGTDRAAEAAKQMGLAPEDIVVNIQGDQPLIAPQTIDETLAPLLSDPDLGMTTAAFAIMDKQEITNPKDVKMVFDADGFALYFSRSPIPFARDKDTRFDTFKHLGIYAYTRRFLDIFTQLPNGVLEEIEKLEQLRALEHSHRIKTVVTRYDSPEVDIPEDIPRIEAMMASMAAD.

Belongs to the KdsB family.

Its subcellular location is the cytoplasm. The catalysed reaction is 3-deoxy-alpha-D-manno-oct-2-ulosonate + CTP = CMP-3-deoxy-beta-D-manno-octulosonate + diphosphate. It participates in nucleotide-sugar biosynthesis; CMP-3-deoxy-D-manno-octulosonate biosynthesis; CMP-3-deoxy-D-manno-octulosonate from 3-deoxy-D-manno-octulosonate and CTP: step 1/1. It functions in the pathway bacterial outer membrane biogenesis; lipopolysaccharide biosynthesis. Its function is as follows. Activates KDO (a required 8-carbon sugar) for incorporation into bacterial lipopolysaccharide in Gram-negative bacteria. The polypeptide is 3-deoxy-manno-octulosonate cytidylyltransferase (Desulfosudis oleivorans (strain DSM 6200 / JCM 39069 / Hxd3) (Desulfococcus oleovorans)).